Here is a 110-residue protein sequence, read N- to C-terminus: Acid stress chaperone HdeA (110 aa).

A signal peptide spans 1-21 (MKKVLGVILGGLLLLPVVSNA). Cysteines 39 and 87 form a disulfide.

It belongs to the HdeA family.

It is found in the periplasm. Required for optimal acid stress protection. Exhibits a chaperone-like activity only at low pH by suppressing non-specifically the aggregation of denaturated periplasmic proteins. This is Acid stress chaperone HdeA from Escherichia coli O157:H7.